Reading from the N-terminus, the 100-residue chain is Urease subunit gamma (100 aa).

The protein belongs to the urease gamma subunit family. As to quaternary structure, heterotrimer of UreA (gamma), UreB (beta) and UreC (alpha) subunits. Three heterotrimers associate to form the active enzyme.

The protein resides in the cytoplasm. It carries out the reaction urea + 2 H2O + H(+) = hydrogencarbonate + 2 NH4(+). The protein operates within nitrogen metabolism; urea degradation; CO(2) and NH(3) from urea (urease route): step 1/1. Its function is as follows. Expression of the urease operon increases the likelihood of bacterial survival by contributing to acid resistance in vitro and in vivo in BALB/c mice. Y.enterocolitica enters the body via an oral path and must survive the acidic stomach before being able to colonize the intestinal mucosa. This is Urease subunit gamma from Yersinia enterocolitica.